The primary structure comprises 155 residues: Medium/long-chain acyl-CoA thioesterase YigI (155 aa).

The protein belongs to the YigI thioesterase family.

It is found in the cytoplasm. It catalyses the reaction a fatty acyl-CoA + H2O = a fatty acid + CoA + H(+). It carries out the reaction a medium-chain fatty acyl-CoA + H2O = a medium-chain fatty acid + CoA + H(+). The enzyme catalyses a long-chain fatty acyl-CoA + H2O = a long-chain fatty acid + CoA + H(+). Its function is as follows. Displays thioesterase activity against medium- to long-chain acyl-CoA substrates. Is involved in the thioesterase-dependent beta-oxidation pathway of (9Z,11E)-octadecadienoate (conjugated linoleic acid or CLA), along with TesB and FadM. This chain is Medium/long-chain acyl-CoA thioesterase YigI (yigI), found in Shigella flexneri.